A 199-amino-acid polypeptide reads, in one-letter code: Neurotrophic factor BDNF precursor form (199 aa).

Positions 1 to 23 are disordered; that stretch reads GQGSLAYPGLRTQGNLETLSGPN. A propeptide spanning residues 1–100 is cleaved from the precursor; that stretch reads GQGSLAYPGL…AANMSMRVRR (100 aa). The segment covering 12–23 has biased composition (polar residues); that stretch reads TQGNLETLSGPN. Asparagine 93 carries an N-linked (GlcNAc...) asparagine glycan. The cysteines at positions 113 and 180 are disulfide-linked.

The protein belongs to the NGF-beta family.

The protein localises to the secreted. Promotes the survival of neuronal populations that are all located either in the central nervous system or directly connected to it. The chain is Neurotrophic factor BDNF precursor form (BDNF) from Eunectes notaeus (Yellow anaconda).